The primary structure comprises 37 residues: MKVRTSVKPICDKCKVIKRNGIVRIICTNPKHKQRQG.

This sequence belongs to the bacterial ribosomal protein bL36 family.

The chain is Large ribosomal subunit protein bL36 from Treponema denticola (strain ATCC 35405 / DSM 14222 / CIP 103919 / JCM 8153 / KCTC 15104).